A 560-amino-acid chain; its full sequence is Probable 2,3-bisphosphoglycerate-independent phosphoglycerate mutase 2 (560 aa).

N-acetylglycine is present on glycine 2. 2 residues coordinate Mn(2+): aspartate 29 and serine 82. Serine 82 serves as the catalytic Phosphoserine intermediate. Residues histidine 141, 171–172 (RD), arginine 207, arginine 214, 287–290 (RADR), and lysine 362 each bind substrate. The Mn(2+) site is built by aspartate 431, histidine 435, aspartate 472, histidine 473, and histidine 502.

This sequence belongs to the BPG-independent phosphoglycerate mutase family. In terms of assembly, monomer. Requires Mn(2+) as cofactor.

The protein resides in the cytoplasm. The catalysed reaction is (2R)-2-phosphoglycerate = (2R)-3-phosphoglycerate. The protein operates within carbohydrate degradation; glycolysis; pyruvate from D-glyceraldehyde 3-phosphate: step 3/5. Its function is as follows. Catalyzes the interconversion of 2-phosphoglycerate (2-PGA) and 3-phosphoglycerate (3-PGA). Required for guard cell function (e.g. blue light-, abscisic acid- (ABA), and low CO(2)-regulated stomatal movements) and fertility (e.g. pollen grains production). The chain is Probable 2,3-bisphosphoglycerate-independent phosphoglycerate mutase 2 (PGM2) from Arabidopsis thaliana (Mouse-ear cress).